The primary structure comprises 136 residues: NADPH-dependent 7-cyano-7-deazaguanine reductase (136 aa).

Cys-50 (thioimide intermediate) is an active-site residue. Asp-57 functions as the Proton donor in the catalytic mechanism. Substrate-binding positions include 72-74 (YEL) and 91-92 (HE).

This sequence belongs to the GTP cyclohydrolase I family. QueF type 1 subfamily.

Its subcellular location is the cytoplasm. The catalysed reaction is 7-aminomethyl-7-carbaguanine + 2 NADP(+) = 7-cyano-7-deazaguanine + 2 NADPH + 3 H(+). It participates in tRNA modification; tRNA-queuosine biosynthesis. Functionally, catalyzes the NADPH-dependent reduction of 7-cyano-7-deazaguanine (preQ0) to 7-aminomethyl-7-deazaguanine (preQ1). The polypeptide is NADPH-dependent 7-cyano-7-deazaguanine reductase (Prochlorococcus marinus (strain MIT 9301)).